A 336-amino-acid polypeptide reads, in one-letter code: uncharacterized protein (336 aa).

Residues 162 to 195 form a disordered region; it reads ARGLPVHSSFKQNNSSQTSSNKGTTTVAAGSGSD. Residues 169-187 are compositionally biased toward low complexity; sequence SSFKQNNSSQTSSNKGTTT.

It belongs to the AHA1 family.

This is an uncharacterized protein from Schizosaccharomyces pombe (strain 972 / ATCC 24843) (Fission yeast).